The chain runs to 400 residues: Phosphoglycerate kinase (400 aa).

Substrate is bound by residues 22–24, Arg-37, 60–63, Arg-119, and Arg-159; these read DLN and HLGR. ATP contacts are provided by residues Lys-209, Gly-297, Glu-328, and 354 to 357; that span reads GGDS.

Belongs to the phosphoglycerate kinase family. As to quaternary structure, monomer.

The protein resides in the cytoplasm. It catalyses the reaction (2R)-3-phosphoglycerate + ATP = (2R)-3-phospho-glyceroyl phosphate + ADP. It participates in carbohydrate degradation; glycolysis; pyruvate from D-glyceraldehyde 3-phosphate: step 2/5. In Saccharopolyspora erythraea (strain ATCC 11635 / DSM 40517 / JCM 4748 / NBRC 13426 / NCIMB 8594 / NRRL 2338), this protein is Phosphoglycerate kinase.